Reading from the N-terminus, the 267-residue chain is Hydroxyethylthiazole kinase (267 aa).

Residue M46 participates in substrate binding. ATP is bound by residues R122 and S168. G195 serves as a coordination point for substrate.

Belongs to the Thz kinase family. Mg(2+) is required as a cofactor.

The catalysed reaction is 5-(2-hydroxyethyl)-4-methylthiazole + ATP = 4-methyl-5-(2-phosphooxyethyl)-thiazole + ADP + H(+). Its pathway is cofactor biosynthesis; thiamine diphosphate biosynthesis; 4-methyl-5-(2-phosphoethyl)-thiazole from 5-(2-hydroxyethyl)-4-methylthiazole: step 1/1. In terms of biological role, catalyzes the phosphorylation of the hydroxyl group of 4-methyl-5-beta-hydroxyethylthiazole (THZ). The chain is Hydroxyethylthiazole kinase from Nitratidesulfovibrio vulgaris (strain DSM 19637 / Miyazaki F) (Desulfovibrio vulgaris).